The sequence spans 439 residues: Phthalate 4,5-dioxygenase oxygenase subunit (439 aa).

Residues 27 to 134 (WTPVCLLEEV…TREWGGFVWA (108 aa)) form the Rieske domain. Positions 70, 72, 89, and 92 each coordinate [2Fe-2S] cluster. His181 and His186 together coordinate Fe cation.

The protein belongs to the bacterial ring-hydroxylating dioxygenase alpha subunit family. This dioxygenase system consists of two proteins: phthalate oxygenase and phthalate oxygenase reductase. Requires [2Fe-2S] cluster as cofactor. It depends on Fe cation as a cofactor.

The catalysed reaction is phthalate + NADH + O2 + H(+) = cis-4,5-dihydroxycyclohexa-2,6-diene-1,2-dicarboxylate + NAD(+). Its pathway is xenobiotic degradation; phthalate degradation; 3,4-dihydroxybenzoate from phthalate: step 1/3. This chain is Phthalate 4,5-dioxygenase oxygenase subunit (pht3), found in Pseudomonas putida (Arthrobacter siderocapsulatus).